The following is a 689-amino-acid chain: Dipeptidyl aminopeptidase BIII (689 aa).

A signal peptide spans 1-26 (MRHPAFRLTLLASTVAFALAPQAAQA). Catalysis depends on charge relay system residues Ser506, Asp593, and His625.

The protein belongs to the peptidase S9C family. In terms of assembly, monomer.

With respect to regulation, strongly inhibited by the serine protease inhibitor diisopropyl fluorophosphate (DFP), chymostatin, leupeptin, 0.5 mM ZnCl(2), 10 mM o-phenanthlorine and N-tosyl-L-phenyl-alanyl chloromethyl ketone (TPCK), but not by N-tosyl-L-lysyl chloromethyl ketone (TLCK). Activity is not affected significantly by iodoacetate (IAA), L-trans-epoxysuccinyl-leucylamido(4-guanido)butane (E64), pepstatin A and phenylmethanesulfonyl fluoride (PMSF). Activity is stimulated by addition of 0.5 mM CaCl(2), 10 mM EDTA and N-ethylmaleimide (NEM). Functionally, exopeptidase that catalyzes the removal of dipeptide units (NH2-P2-P1- or -P1'-P2'-COOH) from the free amino or carboxy termini. Prefers substrates composed of bulky, hydrophobic amino acids at P1 and P1' positions. Has endopeptidase activity on N-terminally blocked peptide derivatives which contain aromatic amino acid residue at the P1 position. Exopeptidase activity is much higher than its endopeptidase activity. This Pseudoxanthomonas mexicana protein is Dipeptidyl aminopeptidase BIII.